We begin with the raw amino-acid sequence, 53 residues long: Metallothionein (53 aa).

Residues 1-6 (MRVIRM) constitute a propeptide that is removed on maturation. Residues Cys-17, His-19, Cys-22, Cys-24, Cys-32, His-33, Cys-34, Cys-43, and Cys-45 each coordinate Cu(+).

The protein belongs to the metallothionein superfamily.

Functionally, metallothioneins are small proteins that have a high content of cysteine residues which allow them to bind heavy metal ions through clusters of thiolate bonds. MymT binds up to seven ions of Cu(+), with a preference for four to six Cu(+) ions, in a solvent-shielded core. MymT protects M.tuberculosis from copper toxicity. This is Metallothionein (mymT) from Mycobacterium tuberculosis (strain CDC 1551 / Oshkosh).